We begin with the raw amino-acid sequence, 334 residues long: Lipoyl synthase (334 aa).

7 residues coordinate [4Fe-4S] cluster: cysteine 71, cysteine 76, cysteine 82, cysteine 97, cysteine 101, cysteine 104, and serine 312. A Radical SAM core domain is found at 83 to 301 (WSHGTATFMV…RQEGLRRGFR (219 aa)).

The protein belongs to the radical SAM superfamily. Lipoyl synthase family. It depends on [4Fe-4S] cluster as a cofactor.

The protein localises to the cytoplasm. It catalyses the reaction [[Fe-S] cluster scaffold protein carrying a second [4Fe-4S](2+) cluster] + N(6)-octanoyl-L-lysyl-[protein] + 2 oxidized [2Fe-2S]-[ferredoxin] + 2 S-adenosyl-L-methionine + 4 H(+) = [[Fe-S] cluster scaffold protein] + N(6)-[(R)-dihydrolipoyl]-L-lysyl-[protein] + 4 Fe(3+) + 2 hydrogen sulfide + 2 5'-deoxyadenosine + 2 L-methionine + 2 reduced [2Fe-2S]-[ferredoxin]. It functions in the pathway protein modification; protein lipoylation via endogenous pathway; protein N(6)-(lipoyl)lysine from octanoyl-[acyl-carrier-protein]: step 2/2. Catalyzes the radical-mediated insertion of two sulfur atoms into the C-6 and C-8 positions of the octanoyl moiety bound to the lipoyl domains of lipoate-dependent enzymes, thereby converting the octanoylated domains into lipoylated derivatives. In Halorhodospira halophila (strain DSM 244 / SL1) (Ectothiorhodospira halophila (strain DSM 244 / SL1)), this protein is Lipoyl synthase.